We begin with the raw amino-acid sequence, 61 residues long: Small ribosomal subunit protein uS14 (61 aa).

Zn(2+)-binding residues include C24, C27, C40, and C43.

The protein belongs to the universal ribosomal protein uS14 family. Zinc-binding uS14 subfamily. In terms of assembly, part of the 30S ribosomal subunit. Contacts proteins S3 and S10. Requires Zn(2+) as cofactor.

In terms of biological role, binds 16S rRNA, required for the assembly of 30S particles and may also be responsible for determining the conformation of the 16S rRNA at the A site. This chain is Small ribosomal subunit protein uS14, found in Dictyoglomus thermophilum (strain ATCC 35947 / DSM 3960 / H-6-12).